A 435-amino-acid chain; its full sequence is Citrate synthase (435 aa).

Catalysis depends on residues H311 and D370.

This sequence belongs to the citrate synthase family. In terms of assembly, homohexamer.

It carries out the reaction oxaloacetate + acetyl-CoA + H2O = citrate + CoA + H(+). The protein operates within carbohydrate metabolism; tricarboxylic acid cycle; isocitrate from oxaloacetate: step 1/2. The sequence is that of Citrate synthase (gltA) from Rickettsia africae (strain ESF-5).